Reading from the N-terminus, the 295-residue chain is Protease HtpX (295 aa).

Helical transmembrane passes span 4-24 (ILLF…TLSL) and 42-62 (QLLV…LFIS). H147 lines the Zn(2+) pocket. E148 is an active-site residue. H151 provides a ligand contact to Zn(2+). A run of 2 helical transmembrane segments spans residues 158 to 178 (VTLA…ARII) and 199 to 219 (ITTI…VMWF). Zn(2+) is bound at residue E224.

The protein belongs to the peptidase M48B family. Zn(2+) is required as a cofactor.

It localises to the cell inner membrane. The protein is Protease HtpX of Pseudomonas savastanoi pv. phaseolicola (strain 1448A / Race 6) (Pseudomonas syringae pv. phaseolicola (strain 1448A / Race 6)).